The sequence spans 224 residues: Viral late gene transcription factor 3 (224 aa).

The protein belongs to the orthopoxvirus VLTF-3/OPG127 family. In terms of assembly, interacts with the late transcription elongation factor VLTF-4/OPG110. Interacts with the late transcription factors VLTF-1/OPG093.

In terms of biological role, acts with RNA polymerase to initiate transcription from late gene promoters. This is Viral late gene transcription factor 3 (OPG127) from Monkeypox virus.